Reading from the N-terminus, the 303-residue chain is Sulfate adenylyltransferase subunit 2 (303 aa).

The interval 281 to 303 is disordered; the sequence is RQGRVIDHDSSGSMEKKKQEGYF.

This sequence belongs to the PAPS reductase family. CysD subfamily. In terms of assembly, heterodimer composed of CysD, the smaller subunit, and CysN.

The catalysed reaction is sulfate + ATP + H(+) = adenosine 5'-phosphosulfate + diphosphate. It participates in sulfur metabolism; hydrogen sulfide biosynthesis; sulfite from sulfate: step 1/3. In terms of biological role, with CysN forms the ATP sulfurylase (ATPS) that catalyzes the adenylation of sulfate producing adenosine 5'-phosphosulfate (APS) and diphosphate, the first enzymatic step in sulfur assimilation pathway. APS synthesis involves the formation of a high-energy phosphoric-sulfuric acid anhydride bond driven by GTP hydrolysis by CysN coupled to ATP hydrolysis by CysD. In Saccharophagus degradans (strain 2-40 / ATCC 43961 / DSM 17024), this protein is Sulfate adenylyltransferase subunit 2.